Here is a 36-residue protein sequence, read N- to C-terminus: U14-ctenitoxin-Co1b (36 aa).

Expressed by the venom gland.

The protein localises to the secreted. Functionally, not toxic to mice by intracerebroventricular injection. The chain is U14-ctenitoxin-Co1b from Ctenus ornatus (Brazilian spider).